Reading from the N-terminus, the 428-residue chain is Elongation factor 1-alpha (428 aa).

In terms of domain architecture, tr-type G spans 5–215; sequence KPHVNIVFIG…ALDQIPEPPK (211 aa). Residues 14–21 are G1; sequence GHVDHGKS. 14–21 is a binding site for GTP; the sequence is GHVDHGKS. A Mg(2+)-binding site is contributed by serine 21. The tract at residues 68–72 is G2; the sequence is GITID. The interval 89–92 is G3; the sequence is DAPG. Residues 89–93 and 144–147 contribute to the GTP site; these read DAPGH and NKMD. The tract at residues 144 to 147 is G4; sequence NKMD. A G5 region spans residues 181–183; sequence SAW.

This sequence belongs to the TRAFAC class translation factor GTPase superfamily. Classic translation factor GTPase family. EF-Tu/EF-1A subfamily.

It is found in the cytoplasm. It carries out the reaction GTP + H2O = GDP + phosphate + H(+). Functionally, GTP hydrolase that promotes the GTP-dependent binding of aminoacyl-tRNA to the A-site of ribosomes during protein biosynthesis. The polypeptide is Elongation factor 1-alpha (Thermococcus kodakarensis (strain ATCC BAA-918 / JCM 12380 / KOD1) (Pyrococcus kodakaraensis (strain KOD1))).